We begin with the raw amino-acid sequence, 893 residues long: ATPase family gene 2 protein homolog A (893 aa).

Over residues 1–10 (MSSKKNRKRL) the composition is skewed to basic residues. Residues 1–26 (MSSKKNRKRLNQSAENGSSLPSAASS) are disordered. Positions 1–237 (MSSKKNRKRL…SLELSLQLSQ (237 aa)) are required for interaction with AFG2B and CINP. Residues 11 to 25 (NQSAENGSSLPSAAS) are compositionally biased toward polar residues. Phosphothreonine is present on T272. A phosphoserine mark is found at S274 and S279. ATP-binding positions include 394–401 (GPPGTGKT) and 668–675 (GPPGCSKT). K859 is covalently cross-linked (Glycyl lysine isopeptide (Lys-Gly) (interchain with G-Cter in SUMO2)).

The protein belongs to the AAA ATPase family. AFG2 subfamily. As to quaternary structure, part of the 55LCC heterohexameric ATPase complex composed at least of AIRIM, AFG2A, AFG2B and CINP. Associates with pre-60S ribosomal particles.

Its subcellular location is the cytoplasm. The protein resides in the mitochondrion. The protein localises to the cytoskeleton. It localises to the spindle. It catalyses the reaction ATP + H2O = ADP + phosphate + H(+). Its activity is regulated as follows. AFG2A alone display limited ATPase activity and is not regulated by RNA or DNA binding. In the context of 55LCC heterohexameric ATPase complex, the ATPase activity increases and is stimulated by DNA binding and inhibited in presence of RNA. ATP-dependent chaperone part of the 55LCC heterohexameric ATPase complex which is chromatin-associated and promotes replisome proteostasis to maintain replication fork progression and genome stability. Required for replication fork progression, sister chromatid cohesion, and chromosome stability. The ATPase activity is specifically enhanced by replication fork DNA and is coupled to cysteine protease-dependent cleavage of replisome substrates in response to replication fork damage. Uses ATPase activity to process replisome substrates in S-phase, facilitating their proteolytic turnover from chromatin to ensure DNA replication and mitotic fidelity. Plays an essential role in the cytoplasmic maturation steps of pre-60S ribosomal particles by promoting the release of shuttling protein RSL24D1/RLP24 from the pre-ribosomal particles. May be involved in morphological and functional mitochondrial transformations during spermatogenesis. The sequence is that of ATPase family gene 2 protein homolog A from Homo sapiens (Human).